The primary structure comprises 175 residues: Cytidylate kinase (175 aa).

Position 7–15 (7–15 (GQPGSGKTS)) interacts with ATP.

It belongs to the cytidylate kinase family. Type 2 subfamily.

It is found in the cytoplasm. The catalysed reaction is CMP + ATP = CDP + ADP. The enzyme catalyses dCMP + ATP = dCDP + ADP. The polypeptide is Cytidylate kinase (Methanocella arvoryzae (strain DSM 22066 / NBRC 105507 / MRE50)).